Here is a 379-residue protein sequence, read N- to C-terminus: 3-dehydroquinate synthase (379 aa).

This sequence belongs to the archaeal-type DHQ synthase family.

It catalyses the reaction 2-amino-2,3,7-trideoxy-D-lyxo-hept-6-ulosonate + NAD(+) + H2O = 3-dehydroquinate + NH4(+) + NADH + H(+). In terms of biological role, catalyzes the oxidative deamination and cyclization of 2-amino-3,7-dideoxy-D-threo-hept-6-ulosonic acid (ADH) to yield 3-dehydroquinate (DHQ), which is fed into the canonical shikimic pathway of aromatic amino acid biosynthesis. The sequence is that of 3-dehydroquinate synthase from Methanococcoides burtonii (strain DSM 6242 / NBRC 107633 / OCM 468 / ACE-M).